The chain runs to 133 residues: uncharacterized protein (133 aa).

This is an uncharacterized protein from Aquifex aeolicus (strain VF5).